A 482-amino-acid chain; its full sequence is Hydroxymethylglutaryl-CoA synthase A (482 aa).

Glu85 acts as the Proton donor/acceptor in catalysis. Cys119 functions as the Acyl-thioester intermediate in the catalytic mechanism. Cys119, Thr161, Ser211, His249, Lys258, Asn325, and Ser358 together coordinate (3S)-3-hydroxy-3-methylglutaryl-CoA. The Proton donor/acceptor role is filled by His249.

This sequence belongs to the thiolase-like superfamily. HMG-CoA synthase family.

The catalysed reaction is acetoacetyl-CoA + acetyl-CoA + H2O = (3S)-3-hydroxy-3-methylglutaryl-CoA + CoA + H(+). It functions in the pathway metabolic intermediate biosynthesis; (R)-mevalonate biosynthesis; (R)-mevalonate from acetyl-CoA: step 2/3. Functionally, condenses acetyl-CoA with acetoacetyl-CoA to form HMG-CoA, which is the substrate for HMG-CoA reductase. In Dictyostelium discoideum (Social amoeba), this protein is Hydroxymethylglutaryl-CoA synthase A (hgsA).